The sequence spans 353 residues: Photosystem II protein D1 (353 aa).

Position 2 is an N-acetylthreonine (Thr2). Thr2 is modified (phosphothreonine). Helical transmembrane passes span 29–46 (YIGW…TATS), 118–133 (HFLL…EWEL), and 142–156 (WIAV…AATA). His118 contributes to the chlorophyll a binding site. Residue Tyr126 participates in pheophytin a binding. [CaMn4O5] cluster contacts are provided by Asp170 and Glu189. A helical membrane pass occupies residues 197–218 (FHMLGVAGVFGGSLFSAMHGSL). His198 contributes to the chlorophyll a binding site. A quinone is bound by residues His215 and 264-265 (SF). His215 is a Fe cation binding site. His272 serves as a coordination point for Fe cation. The helical transmembrane segment at 274–288 (FLAAWPVVGIWFTAL) threads the bilayer. 4 residues coordinate [CaMn4O5] cluster: His332, Glu333, Asp342, and Ala344. Positions 345–353 (AIEAPSTNG) are excised as a propeptide.

Belongs to the reaction center PufL/M/PsbA/D family. As to quaternary structure, PSII is composed of 1 copy each of membrane proteins PsbA, PsbB, PsbC, PsbD, PsbE, PsbF, PsbH, PsbI, PsbJ, PsbK, PsbL, PsbM, PsbT, PsbX, PsbY, PsbZ, Psb30/Ycf12, at least 3 peripheral proteins of the oxygen-evolving complex and a large number of cofactors. It forms dimeric complexes. The D1/D2 heterodimer binds P680, chlorophylls that are the primary electron donor of PSII, and subsequent electron acceptors. It shares a non-heme iron and each subunit binds pheophytin, quinone, additional chlorophylls, carotenoids and lipids. D1 provides most of the ligands for the Mn4-Ca-O5 cluster of the oxygen-evolving complex (OEC). There is also a Cl(-1) ion associated with D1 and D2, which is required for oxygen evolution. The PSII complex binds additional chlorophylls, carotenoids and specific lipids. serves as cofactor. Post-translationally, tyr-161 forms a radical intermediate that is referred to as redox-active TyrZ, YZ or Y-Z. In terms of processing, C-terminally processed by CTPA; processing is essential to allow assembly of the oxygen-evolving complex and thus photosynthetic growth.

It is found in the plastid. It localises to the chloroplast thylakoid membrane. It catalyses the reaction 2 a plastoquinone + 4 hnu + 2 H2O = 2 a plastoquinol + O2. In terms of biological role, photosystem II (PSII) is a light-driven water:plastoquinone oxidoreductase that uses light energy to abstract electrons from H(2)O, generating O(2) and a proton gradient subsequently used for ATP formation. It consists of a core antenna complex that captures photons, and an electron transfer chain that converts photonic excitation into a charge separation. The D1/D2 (PsbA/PsbD) reaction center heterodimer binds P680, the primary electron donor of PSII as well as several subsequent electron acceptors. The protein is Photosystem II protein D1 of Gossypium barbadense (Sea Island cotton).